A 142-amino-acid polypeptide reads, in one-letter code: gSG7 salivary protein (142 aa).

Residues 1-26 (MAARMTIMLPLAVALICLLQTEPGMA) form the signal peptide. Disulfide bonds link Cys-84–Cys-139 and Cys-107–Cys-117.

It is found in the secreted. Functionally, salivary protein that moderately inhibits the alternative pathway for complement system activation in the host. The protein is gSG7 salivary protein of Anopheles darlingi (Mosquito).